We begin with the raw amino-acid sequence, 749 residues long: G-type lectin S-receptor-like serine/threonine-protein kinase At1g61460 (749 aa).

The first 25 residues, 1–25 (MRITFFASLLLFTNTIFISFSFAIA), serve as a signal peptide directing secretion. Residues 26-145 (GINKESPLSI…FSGRTLWQSF (120 aa)) form the Bulb-type lectin domain. Over 26–392 (GINKESPLSI…ELGGNKRKKT (367 aa)) the chain is Extracellular. 4 N-linked (GlcNAc...) asparagine glycosylation sites follow: Asn54, Asn95, Asn118, and Asn135. One can recognise an EGF-like; atypical domain in the interval 247–280 (PAHSCDYYGVCGPFGICVKSVCKCFKGFIPKYIE). Cystine bridges form between Cys251-Cys263 and Cys257-Cys268. Residues Asn286, Asn302, and Asn341 are each glycosylated (N-linked (GlcNAc...) asparagine). Residues 299 to 381 (CQENSTKKDA…GEILSIRLAR (83 aa)) form the PAN domain. 2 disulfides stabilise this stretch: Cys334–Cys355 and Cys338–Cys344. The chain crosses the membrane as a helical span at residues 393-413 (ITASIVSLSLFLILGSTAFGF). The Cytoplasmic segment spans residues 414-749 (WRYRVKHNAS…EMTKSVILGR (336 aa)). The region spanning 454 to 721 (FSLSNKLGQG…DLPSPKQPTF (268 aa)) is the Protein kinase domain. Residues 460–468 (LGQGGFGSV) and Lys482 contribute to the ATP site. Positions 543–560 (RKRLEIDWPKRFDIIQGI) are caM-binding. Residue Asp579 is the Proton acceptor of the active site.

This sequence belongs to the protein kinase superfamily. Ser/Thr protein kinase family.

It is found in the cell membrane. The enzyme catalyses L-seryl-[protein] + ATP = O-phospho-L-seryl-[protein] + ADP + H(+). The catalysed reaction is L-threonyl-[protein] + ATP = O-phospho-L-threonyl-[protein] + ADP + H(+). The sequence is that of G-type lectin S-receptor-like serine/threonine-protein kinase At1g61460 from Arabidopsis thaliana (Mouse-ear cress).